Consider the following 676-residue polypeptide: RNA helicase NPH-II (676 aa).

Positions 172–347 (FSAWISHRPV…VFLPNPAFIH (176 aa)) constitute a Helicase ATP-binding domain. 185–192 (GGTGVGKT) lines the ATP pocket. Residues 296–299 (DEVH) carry the DEXH box motif. A Helicase C-terminal domain is found at 366–542 (NPSSRMAYIE…KFNLTLPEDL (177 aa)).

The protein belongs to the DEAD box helicase family. DEAH subfamily. As to quaternary structure, monomer.

Its subcellular location is the virion. The enzyme catalyses ATP + H2O = ADP + phosphate + H(+). Functionally, NTP-dependent helicase that catalyzes unidirectional unwinding of 3'tailed duplex RNAs and plays an important role during transcription of early mRNAs, presumably by preventing R-loop formation behind the elongating RNA polymerase. Might also play a role in the export of newly synthesized mRNA chains out of the core into the cytoplasm. Required for replication and propagation of viral particles. The sequence is that of RNA helicase NPH-II (OPG084) from Homo sapiens (Human).